The sequence spans 78 residues: Acyl carrier protein (78 aa).

The Carrier domain maps to 2–77 (SNIEQQVKKI…LAIDYINAHN (76 aa)). At S37 the chain carries O-(pantetheine 4'-phosphoryl)serine.

Belongs to the acyl carrier protein (ACP) family. 4'-phosphopantetheine is transferred from CoA to a specific serine of apo-ACP by AcpS. This modification is essential for activity because fatty acids are bound in thioester linkage to the sulfhydryl of the prosthetic group.

The protein localises to the cytoplasm. It participates in lipid metabolism; fatty acid biosynthesis. Its function is as follows. Carrier of the growing fatty acid chain in fatty acid biosynthesis. In Neisseria meningitidis serogroup C / serotype 2a (strain ATCC 700532 / DSM 15464 / FAM18), this protein is Acyl carrier protein.